A 432-amino-acid chain; its full sequence is Adenylosuccinate synthetase (432 aa).

GTP contacts are provided by residues 11–17 (GDEGKGK) and 39–41 (GHT). The active-site Proton acceptor is the D12. Residues D12 and G39 each coordinate Mg(2+). Residues 12 to 15 (DEGK), 37 to 40 (NAGH), T134, R148, N230, T245, and R309 each bind IMP. H40 serves as the catalytic Proton donor. A substrate-binding site is contributed by 305–311 (VTTGRKR). Residues R311, 337–339 (KLD), and 419–421 (GTG) each bind GTP.

Belongs to the adenylosuccinate synthetase family. In terms of assembly, homodimer. Mg(2+) serves as cofactor.

It localises to the cytoplasm. The catalysed reaction is IMP + L-aspartate + GTP = N(6)-(1,2-dicarboxyethyl)-AMP + GDP + phosphate + 2 H(+). It participates in purine metabolism; AMP biosynthesis via de novo pathway; AMP from IMP: step 1/2. Functionally, plays an important role in the de novo pathway and in the salvage pathway of purine nucleotide biosynthesis. Catalyzes the first committed step in the biosynthesis of AMP from IMP. The sequence is that of Adenylosuccinate synthetase from Candida glabrata (strain ATCC 2001 / BCRC 20586 / JCM 3761 / NBRC 0622 / NRRL Y-65 / CBS 138) (Yeast).